Here is a 451-residue protein sequence, read N- to C-terminus: 3-phosphoshikimate 1-carboxyvinyltransferase (451 aa).

The 3-phosphoshikimate site is built by lysine 30, serine 31, and arginine 35. Lysine 30 is a binding site for phosphoenolpyruvate. Phosphoenolpyruvate contacts are provided by glycine 103 and arginine 131. 3-phosphoshikimate contacts are provided by serine 176, glutamine 178, aspartate 329, and lysine 356. A phosphoenolpyruvate-binding site is contributed by glutamine 178. Aspartate 329 functions as the Proton acceptor in the catalytic mechanism. Phosphoenolpyruvate is bound by residues arginine 360 and arginine 404.

It belongs to the EPSP synthase family. As to quaternary structure, monomer.

It localises to the cytoplasm. It catalyses the reaction 3-phosphoshikimate + phosphoenolpyruvate = 5-O-(1-carboxyvinyl)-3-phosphoshikimate + phosphate. It functions in the pathway metabolic intermediate biosynthesis; chorismate biosynthesis; chorismate from D-erythrose 4-phosphate and phosphoenolpyruvate: step 6/7. Its function is as follows. Catalyzes the transfer of the enolpyruvyl moiety of phosphoenolpyruvate (PEP) to the 5-hydroxyl of shikimate-3-phosphate (S3P) to produce enolpyruvyl shikimate-3-phosphate and inorganic phosphate. The chain is 3-phosphoshikimate 1-carboxyvinyltransferase from Parvibaculum lavamentivorans (strain DS-1 / DSM 13023 / NCIMB 13966).